The chain runs to 234 residues: NAD-dependent protein deacylase (234 aa).

The Deacetylase sirtuin-type domain maps to 1–234; the sequence is MKNLVILSGA…IEMASQEMLK (234 aa). An NAD(+)-binding site is contributed by 9–28; it reads GAGISAESGIKTFRDAGGLW. Substrate-binding residues include Y53 and R56. 86–89 is a binding site for NAD(+); it reads QNVD. The Proton acceptor role is filled by H104. NAD(+) contacts are provided by residues 169 to 171 and M217; that span reads GTS.

Belongs to the sirtuin family. Class III subfamily.

It localises to the cytoplasm. The enzyme catalyses N(6)-acetyl-L-lysyl-[protein] + NAD(+) + H2O = 2''-O-acetyl-ADP-D-ribose + nicotinamide + L-lysyl-[protein]. It catalyses the reaction N(6)-succinyl-L-lysyl-[protein] + NAD(+) + H2O = 2''-O-succinyl-ADP-D-ribose + nicotinamide + L-lysyl-[protein]. Its function is as follows. NAD-dependent lysine deacetylase and desuccinylase that specifically removes acetyl and succinyl groups on target proteins. Modulates the activities of several proteins which are inactive in their acylated form. The polypeptide is NAD-dependent protein deacylase (Helicobacter pylori (strain J99 / ATCC 700824) (Campylobacter pylori J99)).